The following is a 332-amino-acid chain: Glycerol-3-phosphate dehydrogenase [NAD(P)+] (332 aa).

Tryptophan 11, arginine 30, and lysine 108 together coordinate NADPH. Sn-glycerol 3-phosphate is bound by residues lysine 108, glycine 137, and serine 139. An NADPH-binding site is contributed by alanine 141. 5 residues coordinate sn-glycerol 3-phosphate: lysine 192, aspartate 245, serine 255, arginine 256, and asparagine 257. Lysine 192 serves as the catalytic Proton acceptor. Arginine 256 contacts NADPH. NADPH contacts are provided by valine 280 and glutamate 282.

This sequence belongs to the NAD-dependent glycerol-3-phosphate dehydrogenase family.

The protein resides in the cytoplasm. It carries out the reaction sn-glycerol 3-phosphate + NAD(+) = dihydroxyacetone phosphate + NADH + H(+). The enzyme catalyses sn-glycerol 3-phosphate + NADP(+) = dihydroxyacetone phosphate + NADPH + H(+). The protein operates within membrane lipid metabolism; glycerophospholipid metabolism. Its function is as follows. Catalyzes the reduction of the glycolytic intermediate dihydroxyacetone phosphate (DHAP) to sn-glycerol 3-phosphate (G3P), the key precursor for phospholipid synthesis. This Burkholderia orbicola (strain MC0-3) protein is Glycerol-3-phosphate dehydrogenase [NAD(P)+].